The following is a 302-amino-acid chain: Troponin T, cardiac muscle isoforms (302 aa).

Residues 1-55 are compositionally biased toward acidic residues; that stretch reads MSDSEEVVEEYEQEQEEEYVEEEEEEWLEEDDGQEDQVDEEEEETEETTAEEQED. 3 disordered regions span residues 1–99, 138–230, and 280–302; these read MSDS…GERL, KDRI…RKPL, and SDHQ…GRWK. Ser2 carries the N-acetylserine modification. Position 2 is a phosphoserine; by CK2 (Ser2). The span at 65–79 shows a compositional bias: basic and acidic residues; that stretch reads EGDREQEPGEGESKP. The span at 82–93 shows a compositional bias: pro residues; sequence KPFMPNLVPPKI. 2 stretches are compositionally biased toward basic and acidic residues: residues 138–186 and 204–230; these read KDRI…EKEA and KSEK…RKPL.

The protein belongs to the troponin T family.

Troponin T is the tropomyosin-binding subunit of troponin, the thin filament regulatory complex which confers calcium-sensitivity to striated muscle actomyosin ATPase activity. The sequence is that of Troponin T, cardiac muscle isoforms (TNNT2) from Gallus gallus (Chicken).